A 242-amino-acid chain; its full sequence is Transcriptional activator protein BjaR1 (242 aa).

The region spanning 173-238 is the HTH luxR-type domain; it reads TPYPSTRLTP…HAVALAIRHK (66 aa). Residues 197–216 constitute a DNA-binding region (H-T-H motif); the sequence is AWEIGEILHITQRTAEEHLA.

The protein belongs to the autoinducer-regulated transcriptional regulatory protein family.

In terms of biological role, transcriptional activator that functions in response to the quorum-sensing autoinducer IV-HSL (isovaleryl-homoserine lactone). Activates BjaI expression. Is sensitive to IV-HSL at concentrations as low as 10 pM. The sequence is that of Transcriptional activator protein BjaR1 (bjaR1) from Bradyrhizobium diazoefficiens (strain JCM 10833 / BCRC 13528 / IAM 13628 / NBRC 14792 / USDA 110).